Here is a 397-residue protein sequence, read N- to C-terminus: MLAQSCCLRLLILLLLFTSICSVPKKSLKYFRNRKLRERRIKLFGTKKTEIQSLLISTWNYTDANLQAWSVLQQGHRRTRQAVIQGCMACQNQRCGLLLAGRSSPDTEGALTLEAAIMDGESLEYGAVAGMDGVRNAILVADAVLKYTKHSVLVGKSATKFARSLGYKEEYLTDARTKNVLKKWSSNGCQPNFWRDVHPSPAENCGPYSPLPEHLHQHPMHQEYAITQGQHDQLAFLALDAEGKFHVASQSSGAQFRIPGRVGDSAVPGAGIYADNEVGGAVASGDGDVLMRHLPAFLAVEAMRAGKDPDQAAEWVVQRLLRHNTEFNGAVVVVNRRGIYAAACAGLDEFNFVVSGGKEYLSMARVERVKCLERENEVIDGGPKGLFPTIPEKQEVP.

The N-terminal stretch at 1 to 22 (MLAQSCCLRLLILLLLFTSICS) is a signal peptide. Cystine bridges form between C90-C95, C189-C205, and C344-C371.

Belongs to the Ntn-hydrolase family.

This Drosophila sechellia (Fruit fly) protein is L-asparaginase-like protein GM15681.